The primary structure comprises 312 residues: Olfactory receptor 6C75 (312 aa).

Topologically, residues 1–23 (MRNSTAVTDFILLGLTSDPQWQV) are extracellular. Residue Asn3 is glycosylated (N-linked (GlcNAc...) asparagine). A helical transmembrane segment spans residues 24 to 44 (VLFIFLLVTYMLSVTGNLIII). At 45–63 (TLTLSDPHLQTPMYFFLRN) the chain is on the cytoplasmic side. The chain crosses the membrane as a helical span at residues 64 to 84 (FSFLEISFTSVCIPRFLVTVV). The Extracellular segment spans residues 85 to 95 (TGNRTISYNGC). Cys95 and Cys177 are joined by a disulfide. The helical transmembrane segment at 96–116 (VAQLFFFIFLGVTEFYLLAAM) threads the bilayer. At 117–140 (SYDRCMAICKPLHYTIIMSTRVCT) the chain is on the cytoplasmic side. Residues 141-161 (LLVFSSWLAGFLIIFPPVMLL) traverse the membrane as a helical segment. Over 162–194 (LQLDFCASNVIDHFICDSSPMLQLSCTNTHFLE) the chain is Extracellular. The helical transmembrane segment at 195–215 (LMAFFLAVVTLMVTLTLVILS) threads the bilayer. Residues 216–237 (YTNIIRTILKIPSMSQRKKAFS) lie on the Cytoplasmic side of the membrane. Residues 238 to 258 (TCSSHMIVVSISYSSCIFMYI) traverse the membrane as a helical segment. The Extracellular portion of the chain corresponds to 259-269 (KTSARERVTLS). A helical transmembrane segment spans residues 270–290 (KGVAVLNTSVAPLLNPFIYTL). The Cytoplasmic segment spans residues 291–312 (RNKQVKQAFKSMVQKMIFSLNK).

This sequence belongs to the G-protein coupled receptor 1 family.

It localises to the cell membrane. In terms of biological role, odorant receptor. In Homo sapiens (Human), this protein is Olfactory receptor 6C75 (OR6C75).